A 300-amino-acid polypeptide reads, in one-letter code: Acetylglutamate kinase (300 aa).

Residues 68 to 69, Arg-90, and Asn-195 each bind substrate; that span reads GG.

This sequence belongs to the acetylglutamate kinase family. ArgB subfamily.

The protein resides in the cytoplasm. It catalyses the reaction N-acetyl-L-glutamate + ATP = N-acetyl-L-glutamyl 5-phosphate + ADP. It participates in amino-acid biosynthesis; L-arginine biosynthesis; N(2)-acetyl-L-ornithine from L-glutamate: step 2/4. Functionally, catalyzes the ATP-dependent phosphorylation of N-acetyl-L-glutamate. The protein is Acetylglutamate kinase of Halorhodospira halophila (strain DSM 244 / SL1) (Ectothiorhodospira halophila (strain DSM 244 / SL1)).